The following is a 197-amino-acid chain: dITP/XTP pyrophosphatase (197 aa).

8-13 contributes to the substrate binding site; it reads TGNAGK. Mg(2+) is bound by residues Glu40 and Asp69. The Proton acceptor role is filled by Asp69. Residues Ser70, 154 to 157, Lys177, and 182 to 183 contribute to the substrate site; these read FGYD and HR.

The protein belongs to the HAM1 NTPase family. In terms of assembly, homodimer. Mg(2+) is required as a cofactor.

The enzyme catalyses XTP + H2O = XMP + diphosphate + H(+). It catalyses the reaction dITP + H2O = dIMP + diphosphate + H(+). The catalysed reaction is ITP + H2O = IMP + diphosphate + H(+). Its function is as follows. Pyrophosphatase that catalyzes the hydrolysis of nucleoside triphosphates to their monophosphate derivatives, with a high preference for the non-canonical purine nucleotides XTP (xanthosine triphosphate), dITP (deoxyinosine triphosphate) and ITP. Seems to function as a house-cleaning enzyme that removes non-canonical purine nucleotides from the nucleotide pool, thus preventing their incorporation into DNA/RNA and avoiding chromosomal lesions. The polypeptide is dITP/XTP pyrophosphatase (rdgB) (Escherichia coli O157:H7).